Reading from the N-terminus, the 270-residue chain is tRNA pseudouridine synthase A (270 aa).

Catalysis depends on Asp60, which acts as the Nucleophile. Tyr118 lines the substrate pocket.

It belongs to the tRNA pseudouridine synthase TruA family. In terms of assembly, homodimer.

The catalysed reaction is uridine(38/39/40) in tRNA = pseudouridine(38/39/40) in tRNA. Formation of pseudouridine at positions 38, 39 and 40 in the anticodon stem and loop of transfer RNAs. The sequence is that of tRNA pseudouridine synthase A from Cronobacter sakazakii (strain ATCC BAA-894) (Enterobacter sakazakii).